A 944-amino-acid polypeptide reads, in one-letter code: uncharacterized protein (944 aa).

This is an uncharacterized protein from Ureaplasma parvum serovar 3 (strain ATCC 700970).